A 432-amino-acid chain; its full sequence is NADH-quinone oxidoreductase subunit D (432 aa).

This sequence belongs to the complex I 49 kDa subunit family. NDH-1 is composed of 14 different subunits. Subunits NuoB, C, D, E, F, and G constitute the peripheral sector of the complex.

The protein localises to the cell membrane. The enzyme catalyses a quinone + NADH + 5 H(+)(in) = a quinol + NAD(+) + 4 H(+)(out). NDH-1 shuttles electrons from NADH, via FMN and iron-sulfur (Fe-S) centers, to quinones in the respiratory chain. The immediate electron acceptor for the enzyme in this species is believed to be a menaquinone. Couples the redox reaction to proton translocation (for every two electrons transferred, four hydrogen ions are translocated across the cytoplasmic membrane), and thus conserves the redox energy in a proton gradient. The chain is NADH-quinone oxidoreductase subunit D from Mycobacterium marinum (strain ATCC BAA-535 / M).